The primary structure comprises 165 residues: Immunity protein YokJ (165 aa).

As to quaternary structure, probably interacts with cognate toxin YokI but not with other non-cognate toxins. The interaction inhibits the toxic activity of YokI.

Its subcellular location is the cytoplasm. In terms of biological role, immunity component of one of 6 LXG toxin-immunity modules in this strain. They promote kin selection, mediate competition in biofilms, and drive spatial segregation of different strains, indicating that LXG toxins may help avoid warfare between strains in biofilms. Mediates intercellular competition during biofilm formation; disruption of the operon disadvantages the bacteria, but overexpression of the cognate immunity protein restores growth in competition with wild-type. In situ neutralizes the toxic effect of cognate toxin YokI. Neutralizes the ability to inhibit growth of cognate toxin YokI upon expression in E.coli. Does not have immunity protein activity on other LXG toxins. This chain is Immunity protein YokJ (yokJ), found in Bacillus subtilis (strain 168).